The sequence spans 346 residues: MKSVVNDTDGIVRVAESVIPEIKHQDEVRVKIASSGLCGSDLPRIFKNGAHYYPITLGHEFSGYIDAVGSGVDDLHPGDAVACVPLLPCFTCPECLKGFYSQCAKYDFIGSRRDGGFAEYIVVKRKNVFALPTDMPIEDGAFIEPITVGLHAFHLAQGCENKNVIIIGAGTIGLLAIQCAVALGAKSVTAIDISSEKLALAKSFGAMQTFNSSEMSAPQMQSVLRELRFNQLILETAGVPQTVELAVEIAGPHAQLALVGTLHQDLHLTSATFGKILRKELTVIGSWMNYSSPWPGQEWETASRLLTERKLSLEPLIAHRGSFESFAQAVRDIARNAMPGKVLLIP.

Positions 38, 59, 89, 92, 95, 103, and 144 each coordinate Zn(2+).

It belongs to the zinc-containing alcohol dehydrogenase family. It depends on Zn(2+) as a cofactor.

The catalysed reaction is galactitol 1-phosphate + NAD(+) = keto-D-tagatose 6-phosphate + NADH + H(+). Functionally, converts galactitol 1-phosphate to tagatose 6-phosphate. In Escherichia coli O157:H7, this protein is Galactitol 1-phosphate 5-dehydrogenase (gatD).